We begin with the raw amino-acid sequence, 622 residues long: Ferredoxin-fold anticodon-binding domain-containing protein 1 homolog (622 aa).

The 94-residue stretch at Leu529 to Arg622 folds into the FDX-ACB domain.

In Mus musculus (Mouse), this protein is Ferredoxin-fold anticodon-binding domain-containing protein 1 homolog (Fdxacb1).